A 571-amino-acid chain; its full sequence is uncharacterized protein (571 aa).

Over 1 to 3 the chain is Cytoplasmic; it reads MNS. The chain crosses the membrane as a helical span at residues 4–24; that stretch reads LQILSFVGFTLLVAVITWWKV. At 25–74 the chain is on the periplasmic side; sequence RKTDTGSQQGYFLAGRSLKAPVIAASLMLTNLSTEQLVGLSGQAYKSGMS. Residues 75–95 traverse the membrane as a helical segment; the sequence is VMGWEVTSAVTLIFLALIFLP. Topologically, residues 96 to 118 are cytoplasmic; it reads RYLKRGIATIPDFLEERYDKTTR. Residues 119–139 traverse the membrane as a helical segment; that stretch reads IIIDFCFLIATGVCFLPIVLY. Residues 140-162 are Periplasmic-facing; it reads SGALALNSLFHVGESLQISHGAA. A helical membrane pass occupies residues 163 to 183; that stretch reads IWLLVILLGLAGILYAVIGGL. Topologically, residues 184-191 are cytoplasmic; the sequence is RAMAVADS. The helical transmembrane segment at 192-212 threads the bilayer; the sequence is INGIGLVIGGLMVPVFGLIAM. At 213–240 the chain is on the periplasmic side; sequence GKGSFMQGIEQLTTVHAEKLNSIGGPTD. The helical transmembrane segment at 241–261 threads the bilayer; that stretch reads PLPIGAAFTGLILVNTFYWCT. The Cytoplasmic segment spans residues 262-283; the sequence is NQGIVQRTLASKSLAEGQKGAL. Residues 284–304 traverse the membrane as a helical segment; that stretch reads LTAVLKMLDPLVLVLPGLIAF. The Periplasmic segment spans residues 305–324; sequence HLYQDLPKADMAYPTLVNNV. A helical transmembrane segment spans residues 325–345; that stretch reads LPVPMVGFFGAVLFGAVISTF. Residues 346–380 lie on the Cytoplasmic side of the membrane; the sequence is NGFLNSASTLFSMGIYRRIINQNAEPQQLVTVGRK. The helical transmembrane segment at 381–401 threads the bilayer; it reads FGFFIAIVSVLVAPWIANAPQ. Residues 402 to 415 are Periplasmic-facing; it reads GLYSWMKQLNGIYN. A helical membrane pass occupies residues 416–436; sequence VPLVTIIIMGFFFPRIPALAA. A topological domain (cytoplasmic) is located at residue Lys437. Residues 438–458 form a helical membrane-spanning segment; sequence VAMGIGIISYITINYLVKFDF. Topologically, residues 459–460 are periplasmic; sequence HF. Residues 461-481 traverse the membrane as a helical segment; the sequence is LYVLACTFCINVVVMLVIGFI. Residues 482-505 are Cytoplasmic-facing; sequence KPRATPFTFKDAFAVDMKPWKNVK. Residues 506-526 traverse the membrane as a helical segment; sequence IASIGILFAMIGVYAGLAEFG. The Periplasmic portion of the chain corresponds to 527-532; the sequence is GYGTRW. A helical transmembrane segment spans residues 533–553; it reads LAMISYFIAAVVIVYLIFDSW. Residues 554-571 lie on the Cytoplasmic side of the membrane; it reads RHRHDPAVTFTPDGKDSL.

This sequence belongs to the sodium:solute symporter (SSF) (TC 2.A.21) family.

It is found in the cell inner membrane. This is an uncharacterized protein from Escherichia coli (strain K12).